We begin with the raw amino-acid sequence, 303 residues long: MSEVEKTYCGFIAIVGRPNVGKSTLLNELLGQKISITSRKPQTTRHRIMGIHTEGPYQAIYVDTPGLHIEEKRAINRLMNRAASSSIGDVELVIFVVEGTNWTADDEMVVNKLRSLQCPVLLAINKVDNVTDKTKLLPHIQFLSQQMNFLDVVPISAEKGMNVDTIASIVRKHMPEADHHFPEDYITDRSQRFMASEIIREKLMRFLGEELPYSVTVEIEQFVPNERGGYNIHGLILVEREGQKKMVIGNKGSKIKTIGIEARQDMEQMFEAKVHLELWVKVKSGWADDERALRSLGYTDDLK.

An Era-type G domain is found at 8-176; it reads YCGFIAIVGR…ASIVRKHMPE (169 aa). Positions 16–23 are G1; it reads GRPNVGKS. GTP is bound at residue 16-23; the sequence is GRPNVGKS. Positions 42-46 are G2; the sequence is QTTRH. The tract at residues 63-66 is G3; the sequence is DTPG. Residues 63–67 and 125–128 each bind GTP; these read DTPGL and NKVD. The interval 125–128 is G4; the sequence is NKVD. The G5 stretch occupies residues 155–157; that stretch reads ISA. Residues 207–284 form the KH type-2 domain; the sequence is LGEELPYSVT…HLELWVKVKS (78 aa).

This sequence belongs to the TRAFAC class TrmE-Era-EngA-EngB-Septin-like GTPase superfamily. Era GTPase family. As to quaternary structure, monomer.

It is found in the cytoplasm. Its subcellular location is the cell inner membrane. Its function is as follows. An essential GTPase that binds both GDP and GTP, with rapid nucleotide exchange. Plays a role in 16S rRNA processing and 30S ribosomal subunit biogenesis and possibly also in cell cycle regulation and energy metabolism. The chain is GTPase Era from Yersinia enterocolitica serotype O:8 / biotype 1B (strain NCTC 13174 / 8081).